We begin with the raw amino-acid sequence, 256 residues long: Acetyl-coenzyme A carboxylase carboxyl transferase subunit alpha (256 aa).

Positions 1-236 (MTDVSRVLKE…KANLIEQITS (236 aa)) constitute a CoA carboxyltransferase C-terminal domain.

It belongs to the AccA family. In terms of assembly, acetyl-CoA carboxylase is a heterohexamer composed of biotin carboxyl carrier protein (AccB), biotin carboxylase (AccC) and two subunits each of ACCase subunit alpha (AccA) and ACCase subunit beta (AccD).

It is found in the cytoplasm. It catalyses the reaction N(6)-carboxybiotinyl-L-lysyl-[protein] + acetyl-CoA = N(6)-biotinyl-L-lysyl-[protein] + malonyl-CoA. The protein operates within lipid metabolism; malonyl-CoA biosynthesis; malonyl-CoA from acetyl-CoA: step 1/1. In terms of biological role, component of the acetyl coenzyme A carboxylase (ACC) complex. First, biotin carboxylase catalyzes the carboxylation of biotin on its carrier protein (BCCP) and then the CO(2) group is transferred by the carboxyltransferase to acetyl-CoA to form malonyl-CoA. This is Acetyl-coenzyme A carboxylase carboxyl transferase subunit alpha from Streptococcus pyogenes serotype M12 (strain MGAS2096).